Reading from the N-terminus, the 587-residue chain is Pyruvate kinase (587 aa).

Arg-33 is a substrate binding site. K(+)-binding residues include Asn-35, Ser-37, Asp-67, and Thr-68. ATP is bound at residue 35–38 (NFSH). The ATP site is built by Arg-74 and Lys-157. Lys-221 contacts substrate. Glu-223 contacts Mg(2+). The substrate site is built by Gly-246, Asp-247, and Thr-279. Residue Asp-247 participates in Mg(2+) binding.

Belongs to the pyruvate kinase family. The protein in the C-terminal section; belongs to the PEP-utilizing enzyme family. In terms of assembly, homotetramer. Mg(2+) serves as cofactor. The cofactor is K(+). Post-translationally, the N-terminus is blocked.

It carries out the reaction pyruvate + ATP = phosphoenolpyruvate + ADP + H(+). It participates in carbohydrate degradation; glycolysis; pyruvate from D-glyceraldehyde 3-phosphate: step 5/5. Exhibits homotropic positive cooperativity for PEP. Allosterically activated by ribose-5-phosphate, AMP and other nucleoside monophosphates but not by fructose-1,6-bisphosphate. Functionally, catalyzes the phosphoryl transfer from phosphoenolpyruvate (PEP) to ADP to form pyruvate and ATP. Has a broad specificity for nucleoside diphosphates and can use ADP, GDP, IDP and UDP. This is Pyruvate kinase (pyk) from Geobacillus stearothermophilus (Bacillus stearothermophilus).